A 502-amino-acid chain; its full sequence is Probable cytosol aminopeptidase (502 aa).

Residues Lys267 and Asp272 each contribute to the Mn(2+) site. Lys279 is an active-site residue. Positions 290, 349, and 351 each coordinate Mn(2+). Residue Arg353 is part of the active site.

The protein belongs to the peptidase M17 family. Requires Mn(2+) as cofactor.

Its subcellular location is the cytoplasm. It catalyses the reaction Release of an N-terminal amino acid, Xaa-|-Yaa-, in which Xaa is preferably Leu, but may be other amino acids including Pro although not Arg or Lys, and Yaa may be Pro. Amino acid amides and methyl esters are also readily hydrolyzed, but rates on arylamides are exceedingly low.. It carries out the reaction Release of an N-terminal amino acid, preferentially leucine, but not glutamic or aspartic acids.. In terms of biological role, presumably involved in the processing and regular turnover of intracellular proteins. Catalyzes the removal of unsubstituted N-terminal amino acids from various peptides. The sequence is that of Probable cytosol aminopeptidase from Aeromonas salmonicida (strain A449).